A 212-amino-acid chain; its full sequence is Ras-related protein Rab-2A (212 aa).

Positions 16, 17, 18, 19, 20, 21, and 38 each coordinate GTP. Ser20 contributes to the Mg(2+) binding site. A Switch 1 motif is present at residues 37-42 (LTIGVE). Residues Thr38 and Asp61 each coordinate Mg(2+). The Switch 2 signature appears at 63-72 (AGQESFRSIT). The GTP site is built by Gly64, Asn119, Lys120, Asp122, Ala150, and Lys151. 2 S-geranylgeranyl cysteine lipidation sites follow: Cys211 and Cys212.

This sequence belongs to the small GTPase superfamily. Rab family. As to quaternary structure, interacts with PRKCI. Interacts with TRIP11. Interacts (in GTP-bound form) with GARIN1B. Mg(2+) is required as a cofactor. In terms of processing, prenylated. Prenylation is required for association with cellular membranes.

Its subcellular location is the endoplasmic reticulum-Golgi intermediate compartment membrane. The protein resides in the melanosome. It localises to the endoplasmic reticulum membrane. It is found in the golgi apparatus membrane. The protein localises to the cytoplasmic vesicle. Its subcellular location is the secretory vesicle. The protein resides in the acrosome. The catalysed reaction is GTP + H2O = GDP + phosphate + H(+). Its activity is regulated as follows. Regulated by guanine nucleotide exchange factors (GEFs) which promote the exchange of bound GDP for free GTP, GTPase activating proteins (GAPs) which increase the GTP hydrolysis activity, and GDP dissociation inhibitors (GDIs) which inhibit the dissociation of the nucleotide from the GTPase. Functionally, the small GTPases Rab are key regulators of intracellular membrane trafficking, from the formation of transport vesicles to their fusion with membranes. Rabs cycle between active GTP-bound and inactive GDP-bound states. In their active state, drive transport of vesicular carriers from donor organelles to acceptor organelles to regulate the membrane traffic that maintains organelle identity and morphology. RAB2A regulates autophagy by promoting autophagosome-lysosome fusion via recruitment of the HOPS endosomal tethering complex; this process involves autophagosomal RAB2A and lysosomal RAB39A recruitment of HOPS subcomplexes VPS39-VPS11 and VPS41-VPS16-VPS18-VPS33A, respectively, which assemble into a functional complex to mediate membrane tethering and SNAREs-driven membrane fusion. Required for protein transport from the endoplasmic reticulum to the Golgi complex. Regulates the compacted morphology of the Golgi. Together with RAB2B, redundantly required for efficient autophagic flux. The chain is Ras-related protein Rab-2A (RAB2A) from Gallus gallus (Chicken).